The chain runs to 21 residues: Ocellatin-4 (21 aa).

Isoleucine 21 carries the post-translational modification Isoleucine amide.

In terms of tissue distribution, expressed by the skin dorsal glands.

It is found in the secreted. Has hemolytic activity against human erythrocytes (HC50=14.3 uM). Has antibacterial activity against the Gram-positive bacterium S.aureus ATCC 25923 (MIC=64 uM) and the Gram-negative bacterium E.coli ATCC 25922 (MIC=64 uM). This Leptodactylus ocellatus (Argus frog) protein is Ocellatin-4.